Reading from the N-terminus, the 111-residue chain is MICOS complex subunit MIC13 (111 aa).

The helical transmembrane segment at 8–26 (VVKFATKVTIAGGALYVAY) threads the bilayer.

Belongs to the MICOS complex subunit Mic13 family. As to quaternary structure, component of the mitochondrial contact site and cristae organizing system (MICOS) complex.

It localises to the mitochondrion inner membrane. Functionally, component of the MICOS complex, a large protein complex of the mitochondrial inner membrane that plays crucial roles in the maintenance of crista junctions, inner membrane architecture, and formation of contact sites to the outer membrane. Constituent of mature MICOS complex, it is required for the formation of cristae junction (CJ) and maintenance of cristae morphology. Required for the incorporation of MIC10 into the MICOS complex. The polypeptide is MICOS complex subunit MIC13 (Danio rerio (Zebrafish)).